Here is a 141-residue protein sequence, read N- to C-terminus: Cytochrome c-type biogenesis protein CcmE (141 aa).

Residues 1–7 (MQRKHKR) lie on the Cytoplasmic side of the membrane. A helical; Signal-anchor for type II membrane protein transmembrane segment spans residues 8–28 (ILFVAVSFIALGCVSAFVLFE). At 29–141 (LSKSISFFCT…SSDAAVIGSS (113 aa)) the chain is on the periplasmic side. Heme-binding residues include His-121 and Tyr-125.

This sequence belongs to the CcmE/CycJ family.

The protein resides in the cell inner membrane. Functionally, heme chaperone required for the biogenesis of c-type cytochromes. Transiently binds heme delivered by CcmC and transfers the heme to apo-cytochromes in a process facilitated by CcmF and CcmH. This Anaplasma phagocytophilum (strain HZ) protein is Cytochrome c-type biogenesis protein CcmE.